A 376-amino-acid polypeptide reads, in one-letter code: Actin, macronuclear (376 aa).

This sequence belongs to the actin family.

The protein resides in the cytoplasm. It is found in the cytoskeleton. The catalysed reaction is ATP + H2O = ADP + phosphate + H(+). Functionally, actins are highly conserved proteins that are involved in various types of cell motility and are ubiquitously expressed in all eukaryotic cells. The chain is Actin, macronuclear from Tetrahymena thermophila.